Reading from the N-terminus, the 184-residue chain is GTP cyclohydrolase 1 (184 aa).

Zn(2+) is bound by residues cysteine 75, histidine 78, and cysteine 146.

This sequence belongs to the GTP cyclohydrolase I family. In terms of assembly, toroid-shaped homodecamer, composed of two pentamers of five dimers.

The catalysed reaction is GTP + H2O = 7,8-dihydroneopterin 3'-triphosphate + formate + H(+). It participates in cofactor biosynthesis; 7,8-dihydroneopterin triphosphate biosynthesis; 7,8-dihydroneopterin triphosphate from GTP: step 1/1. This is GTP cyclohydrolase 1 from Streptococcus pneumoniae serotype 2 (strain D39 / NCTC 7466).